A 508-amino-acid polypeptide reads, in one-letter code: Photosystem II CP47 reaction center protein (508 aa).

The next 6 membrane-spanning stretches (helical) occupy residues 21-36 (AVHI…WAGS), 101-115 (IVFS…IWHW), 140-156 (GIHL…FGAF), 203-218 (IAAG…FHLS), 237-252 (VLSS…AFVV), and 457-472 (SFAL…HGAR).

Belongs to the PsbB/PsbC family. PsbB subfamily. PSII is composed of 1 copy each of membrane proteins PsbA, PsbB, PsbC, PsbD, PsbE, PsbF, PsbH, PsbI, PsbJ, PsbK, PsbL, PsbM, PsbT, PsbX, PsbY, PsbZ, Psb30/Ycf12, at least 3 peripheral proteins of the oxygen-evolving complex and a large number of cofactors. It forms dimeric complexes. Binds multiple chlorophylls. PSII binds additional chlorophylls, carotenoids and specific lipids. is required as a cofactor.

The protein resides in the plastid. Its subcellular location is the chloroplast thylakoid membrane. In terms of biological role, one of the components of the core complex of photosystem II (PSII). It binds chlorophyll and helps catalyze the primary light-induced photochemical processes of PSII. PSII is a light-driven water:plastoquinone oxidoreductase, using light energy to abstract electrons from H(2)O, generating O(2) and a proton gradient subsequently used for ATP formation. The protein is Photosystem II CP47 reaction center protein of Buxus microphylla (Littleleaf boxwood).